We begin with the raw amino-acid sequence, 500 residues long: L-arabinose isomerase (500 aa).

Positions 306, 333, 349, and 448 each coordinate Mn(2+).

Belongs to the arabinose isomerase family. It depends on Mn(2+) as a cofactor.

The catalysed reaction is beta-L-arabinopyranose = L-ribulose. Its pathway is carbohydrate degradation; L-arabinose degradation via L-ribulose; D-xylulose 5-phosphate from L-arabinose (bacterial route): step 1/3. In terms of biological role, catalyzes the conversion of L-arabinose to L-ribulose. This chain is L-arabinose isomerase, found in Shewanella sp. (strain MR-4).